A 401-amino-acid chain; its full sequence is tRNA (guanine-N(7)-)-methyltransferase non-catalytic subunit wuho (401 aa).

The disordered stretch occupies residues 45–85 (KGRPRKYFDADSDSDEEQQNGDEPGTGKNNGGGDTGKKDQD). The segment covering 54 to 64 (ADSDSDEEQQN) has biased composition (acidic residues). 3 WD repeats span residues 86 to 125 (DQTNAIVALDVNEDRSLVAVATGDKSLYLFEVDQDGRTLK), 174 to 213 (GHMSQVLDVLIDTEEKLIITSDRDEKIRVTCHPDCHNIET), and 217 to 255 (GHTEFVSHLEFLGPELLLSLSGDKTLRWWNYTSGKELAR).

Belongs to the WD repeat TRM82 family. Forms a heterodimer with the catalytic subunit.

Its subcellular location is the nucleus. It functions in the pathway tRNA modification; N(7)-methylguanine-tRNA biosynthesis. Functionally, required for the formation of N(7)-methylguanine at position 46 (m7G46) in tRNA. In the complex, it is required to stabilize and induce conformational changes of the catalytic subunit. This is tRNA (guanine-N(7)-)-methyltransferase non-catalytic subunit wuho from Culex quinquefasciatus (Southern house mosquito).